The sequence spans 82 residues: Small ribosomal subunit protein bS16 (82 aa).

Belongs to the bacterial ribosomal protein bS16 family.

The polypeptide is Small ribosomal subunit protein bS16 (Acidobacterium capsulatum (strain ATCC 51196 / DSM 11244 / BCRC 80197 / JCM 7670 / NBRC 15755 / NCIMB 13165 / 161)).